The primary structure comprises 132 residues: Phycocyanin PC645 alpha-1 subunit (132 aa).

Residues D54 and R68 each contribute to the (2R,3E)-phycocyanobilin site. Positions 70, 76, 77, and 92 each coordinate mesobiliverdin. P123 and I125 together coordinate 15,16-dihydrobiliverdin.

This sequence belongs to the phycoerythrin family. As to quaternary structure, heterotetramer of 2 different alpha chains and 2 identical beta chains which form 2 alpha-beta heterodimers within the heterotetramer. In terms of processing, contains two phycocyanobilin chromophores, one mesobiliverdin chromophore and one 15,16-dihydrobiliverdin chromophore with binding mediated by both the alpha and beta subunits.

It is found in the plastid. The protein localises to the chloroplast thylakoid membrane. Light-harvesting photosynthetic tetrapyrrole chromophore-protein from the phycobiliprotein complex. The chain is Phycocyanin PC645 alpha-1 subunit from Chroomonas sp. (strain CCMP270).